The sequence spans 250 residues: tRNA pseudouridine synthase A (250 aa).

D52 functions as the Nucleophile in the catalytic mechanism. Position 111 (Y111) interacts with substrate.

The protein belongs to the tRNA pseudouridine synthase TruA family. In terms of assembly, homodimer.

It carries out the reaction uridine(38/39/40) in tRNA = pseudouridine(38/39/40) in tRNA. Its function is as follows. Formation of pseudouridine at positions 38, 39 and 40 in the anticodon stem and loop of transfer RNAs. The chain is tRNA pseudouridine synthase A from Methylobacterium sp. (strain 4-46).